Consider the following 464-residue polypeptide: MQHVPTIAIVGRPNVGKSAIFNRMAGRRIAIVHDEPGVTRDRLSAPCKITDRACKIMDTGGIGARLSDGFAEQVEAEADIAIKTADLILFVLDCRDHLTPIDQSIADHLRKSDIPVILLLNKADHEKQDLNLGEFAGLGFDDHIFLSAAHGRGFSELASRLDGFLKQKGAPLKEELEEEPENGEETALPIKVAVVGRPNAGKSSLVNAILRDRRTIVSNVAGTTRDAIDVPYLHDGQPYVLIDTAGMRPRSRRDTSVEVFSAMRSEKAIRRADICLLVIDIAAGITQQDRRIAGIIAEEGKPCIIIVNKFDLFHPNASRKDRMAEVEEQVRRELFFISYAPFIATSAKKAEGVEIIFKVITRIRRESHNLPTTGQLNRLIQLAQQMNPPGAASGSARRLKIYYATTAVDPKYNTIPVPRYVLFVNDKSLLTDSYSQYLRNKIREAYPAPGIPVIFSARSRVRND.

EngA-type G domains lie at 5–169 (PTIA…KQKG) and 190–368 (IKVA…RESH). GTP-binding positions include 11–18 (GRPNVGKS), 58–62 (DTGGI), 121–124 (NKAD), 196–203 (GRPNAGKS), 243–247 (DTAGM), and 308–311 (NKFD). A KH-like domain is found at 369-461 (NLPTTGQLNR…PVIFSARSRV (93 aa)).

Belongs to the TRAFAC class TrmE-Era-EngA-EngB-Septin-like GTPase superfamily. EngA (Der) GTPase family. Associates with the 50S ribosomal subunit.

Its function is as follows. GTPase that plays an essential role in the late steps of ribosome biogenesis. The chain is GTPase Der from Akkermansia muciniphila (strain ATCC BAA-835 / DSM 22959 / JCM 33894 / BCRC 81048 / CCUG 64013 / CIP 107961 / Muc).